Here is a 141-residue protein sequence, read N- to C-terminus: Ribosome-binding factor A (141 aa).

Residues 120 to 141 (DEALRAQSAGARPAGDEDPYKP) form a disordered region.

The protein belongs to the RbfA family. Monomer. Binds 30S ribosomal subunits, but not 50S ribosomal subunits or 70S ribosomes.

It is found in the cytoplasm. In terms of biological role, one of several proteins that assist in the late maturation steps of the functional core of the 30S ribosomal subunit. Associates with free 30S ribosomal subunits (but not with 30S subunits that are part of 70S ribosomes or polysomes). Required for efficient processing of 16S rRNA. May interact with the 5'-terminal helix region of 16S rRNA. The protein is Ribosome-binding factor A of Corynebacterium jeikeium (strain K411).